The primary structure comprises 855 residues: MGLLNAVFGTYSEREVKRLKPTIQKINDLDEELQKLSDEELKAKTPAFKERLANGETLDDILPEAFAVVREASKRVLGMKHYDEQLMGGMILHQGRISEMKTGEGKTLVATLPAYLNGLSGNGVHIVTVNDYLAKRDAEQMGELYGFLGLTTGVIVHELNNDQRRESYASDITYGTNNEFGFDYLRDNMVIYKEERVQRPLNFAIVDEVDSILIDEARTPLIISGQGEKSTEFYKVADYFAKKLVVEKDFTRDEKANAVMLTDEGVRKAEVTFKVANYADAENIELQHYVTQALKANFAMRRDKDYMVKDGEVIIVDEFTGRLMEGRRYSDGLHQAIEAKEGVKIARESKTLATITFQNYFRMYKKLSGMTGTALTEENEFREIYGLDVIVIPTHRPIARKDNPDLVFSTELGKIKAVASEVEKAHAKGQPVLVGTVSIEKSELVSSMLKKKGVPHQVLNAKFHEQEAEIISHAGEKGMVTIATNMAGRGTDIKLGEGVVELGGLKIIGTERHESRRIDNQLRGRSGRQGDPGESTFFISLEDDLMRIFGSEKIQGVVEKLGLQEEEAIESKMVSKAIENAQKKVEGNNFDIRKQLLGYDDVMNIQREVIYKQRSEVLEGEDVKEEILSMTKDIIADAVNTYVTGESEDYREEFLHLMVALQDICIAPGTVNLPSLENLSNEEIIESLFESARKFYEHKEEEFGAERLREVERVVLLRAVDTKWMNHIDNMDHLKQGIGLQSFKQIDPVQAYQMEGSEMFNDMIKAIKEETVRLLFHVRIEVAPERVRVAQETAAIHEESSSAAAPGPGQNQPGGPGGPSAGPVAPVRNLDKHGRNELCPCGSGKKFKNCCGREA.

ATP-binding positions include Gln-85, 103–107 (GEGKT), and Asp-492. The segment at 794 to 845 (AAIHEESSSAAAPGPGQNQPGGPGGPSAGPVAPVRNLDKHGRNELCPCGSGK) is disordered. Low complexity predominate over residues 801–811 (SSAAAPGPGQN). Zn(2+)-binding residues include Cys-839, Cys-841, Cys-850, and Cys-851.

Belongs to the SecA family. As to quaternary structure, monomer and homodimer. Part of the essential Sec protein translocation apparatus which comprises SecA, SecYEG and auxiliary proteins SecDF. Other proteins may also be involved. It depends on Zn(2+) as a cofactor.

Its subcellular location is the cell membrane. It localises to the cytoplasm. It catalyses the reaction ATP + H2O + cellular proteinSide 1 = ADP + phosphate + cellular proteinSide 2.. Functionally, part of the Sec protein translocase complex. Interacts with the SecYEG preprotein conducting channel. Has a central role in coupling the hydrolysis of ATP to the transfer of proteins into and across the cell membrane, serving as an ATP-driven molecular motor driving the stepwise translocation of polypeptide chains across the membrane. The sequence is that of Protein translocase subunit SecA from Clostridium beijerinckii (strain ATCC 51743 / NCIMB 8052) (Clostridium acetobutylicum).